Consider the following 255-residue polypeptide: Ribosomal RNA small subunit methyltransferase A (255 aa).

S-adenosyl-L-methionine is bound by residues Asn-12, Leu-14, Gly-39, Glu-60, Asp-84, and Asn-106.

This sequence belongs to the class I-like SAM-binding methyltransferase superfamily. rRNA adenine N(6)-methyltransferase family. RsmA subfamily.

It is found in the cytoplasm. It catalyses the reaction adenosine(1518)/adenosine(1519) in 16S rRNA + 4 S-adenosyl-L-methionine = N(6)-dimethyladenosine(1518)/N(6)-dimethyladenosine(1519) in 16S rRNA + 4 S-adenosyl-L-homocysteine + 4 H(+). In terms of biological role, specifically dimethylates two adjacent adenosines (A1518 and A1519) in the loop of a conserved hairpin near the 3'-end of 16S rRNA in the 30S particle. May play a critical role in biogenesis of 30S subunits. This Herminiimonas arsenicoxydans protein is Ribosomal RNA small subunit methyltransferase A.